Here is a 1168-residue protein sequence, read N- to C-terminus: Myosin IC heavy chain (1168 aa).

The region spanning 7–666 (HGVDDMVMLT…SVFSLEELRD (660 aa)) is the Myosin motor domain. 101-108 (GESGAGKT) contacts ATP. The residue at position 311 (serine 311) is a Phosphoserine. The actin-binding stretch occupies residues 542-564 (INILVATLSKCTPHYIRCIKPNE). One can recognise a TH1 domain in the interval 704-892 (KERRRLSLER…KVSVAPGLPP (189 aa)). Disordered regions lie at residues 876–909 (DGKV…GGAS), 921–978 (ILGA…APGP), and 1036–1168 (AAAP…PPGM). The segment covering 895 to 909 (APNIQAPQETSGGAS) has biased composition (polar residues). Gly residues-rich tracts occupy residues 924 to 939 (AKGG…GGPS) and 950 to 959 (PGGGGGGPSP). The segment covering 960-978 (FGGRPSPSGPPAAASAPGP) has biased composition (low complexity). In terms of domain architecture, SH3 spans 976–1035 (PGPEQARALYDFAAENPDELTFNEGAVVTVINKSNPDWWEGELNGQRGVFPASYVELIPR). Pro residues predominate over residues 1040–1052 (APGPSGGPRPAPP). Composition is skewed to gly residues over residues 1063–1083 (GGPG…GRGG) and 1090–1099 (GRAGPPGGRG). The segment covering 1100–1112 (MPAPGGAAPRGRG) has biased composition (low complexity). Residues 1120–1141 (GPPGGGRGGAPPPGGMRGRGGP) are compositionally biased toward gly residues. Residues 1152-1161 (GGMMPPRGRA) show a composition bias toward low complexity.

This sequence belongs to the TRAFAC class myosin-kinesin ATPase superfamily. Myosin family. As to quaternary structure, myosin I heavy chain is single-headed. Dimer of a heavy and a light chain. Inability to self-assemble into filaments.

Its function is as follows. Myosin is a protein that binds to F-actin and has ATPase activity that is activated by F-actin. The protein is Myosin IC heavy chain (MIC) of Acanthamoeba castellanii (Amoeba).